The chain runs to 244 residues: Transmembrane protein 176A (244 aa).

At Ser42 the chain carries Phosphoserine. 4 helical membrane passes run 60–80, 92–112, 122–142, and 204–224; these read VLVA…VLGG, SEGA…VAFL, ALMR…AIVI, and LLGI…VYIW.

The protein belongs to the TMEM176 family. Interacts with MCOLN2. Specifically expressed in lung, kidney and spleen.

It localises to the membrane. The polypeptide is Transmembrane protein 176A (Tmem176a) (Mus musculus (Mouse)).